The chain runs to 518 residues: DNA-binding protein Ikaros (518 aa).

The interval 1–51 (METDEAQDMSQVSGKESPPISDVPDDADEPMPVPEDLSTTTGGQQSVKNER) is disordered. Residues 37–47 (LSTTTGGQQSV) show a composition bias toward polar residues. 4 consecutive C2H2-type zinc fingers follow at residues 117–139 (LKCD…NRSH), 145–167 (FQCN…IKLH), 173–195 (FKCH…LRTH), and 201–224 (HKCG…ERCH). Positions 381–405 (SVSSERDASPSNSCQDSTDTESNNE) are disordered. 2 C2H2-type zinc fingers span residues 461 to 483 (YKCE…MGCH) and 489 to 513 (FECN…RGEH).

This sequence belongs to the Ikaros C2H2-type zinc-finger protein family. Expressed in embryonic hematopoietic organs such as the bursa of Fabricius, thymus and spleen. In the adult, expressed in spleen, thymus, bursa and peripheral blood leukocytes.

The protein localises to the nucleus. In terms of biological role, binds and activates the enhancer (delta-A element) of the CD3-delta gene. Functions in the specification and the maturation of the T-lymphocyte. Also interacts with a critical control element in the TDT (terminal deoxynucleotidyltransferase) promoter as well as with the promoters for other genes expressed during early stages of B- and T-cell development. Function is isoform-specific and is modulated by dominant-negative inactive isoforms. This is DNA-binding protein Ikaros (IKZF1) from Gallus gallus (Chicken).